Reading from the N-terminus, the 361-residue chain is Dynein axonemal assembly factor 8 (361 aa).

Disordered stretches follow at residues D65 to K191 and A309 to L334. Positions T136–P157 are enriched in polar residues. 2 positions are modified to phosphoserine: S142 and S144. The span at G321–L334 shows a compositional bias: low complexity.

The protein localises to the dynein axonemal particle. The protein resides in the cytoplasm. Functionally, in cyliated cells, dynein axonemal particle-specific protein required for deployment of ODA to the axoneme. Interacts with outer dynein arm (ODA) subunits. The polypeptide is Dynein axonemal assembly factor 8 (DNAAF8) (Bos taurus (Bovine)).